Here is a 445-residue protein sequence, read N- to C-terminus: Trigger factor (445 aa).

The PPIase FKBP-type domain occupies 162-247; sequence GDQITMDAVG…VKAVHTAEPT (86 aa).

Belongs to the FKBP-type PPIase family. Tig subfamily.

It is found in the cytoplasm. It carries out the reaction [protein]-peptidylproline (omega=180) = [protein]-peptidylproline (omega=0). Its function is as follows. Involved in protein export. Acts as a chaperone by maintaining the newly synthesized protein in an open conformation. Functions as a peptidyl-prolyl cis-trans isomerase. The polypeptide is Trigger factor (Rickettsia bellii (strain OSU 85-389)).